We begin with the raw amino-acid sequence, 158 residues long: Large ribosomal subunit protein eL24 (158 aa).

Over residues 98–146 (LDASHKKAEAEKAVRELKQKKANDIEKKRADRKLQGKDVKAAKKAETKK) the composition is skewed to basic and acidic residues. The interval 98 to 158 (LDASHKKAEA…QPVGAKGGKK (61 aa)) is disordered.

It belongs to the eukaryotic ribosomal protein eL24 family.

The chain is Large ribosomal subunit protein eL24 (RPL24) from Tetrahymena thermophila (strain SB210).